The following is a 431-amino-acid chain: Serine hydroxymethyltransferase 2 (431 aa).

Residues L131 and 135–137 (GHL) each bind (6S)-5,6,7,8-tetrahydrofolate. The residue at position 240 (K240) is an N6-(pyridoxal phosphate)lysine.

The protein belongs to the SHMT family. Homodimer. The cofactor is pyridoxal 5'-phosphate.

It is found in the cytoplasm. It catalyses the reaction (6R)-5,10-methylene-5,6,7,8-tetrahydrofolate + glycine + H2O = (6S)-5,6,7,8-tetrahydrofolate + L-serine. Its pathway is one-carbon metabolism; tetrahydrofolate interconversion. The protein operates within amino-acid biosynthesis; glycine biosynthesis; glycine from L-serine: step 1/1. Catalyzes the reversible interconversion of serine and glycine with tetrahydrofolate (THF) serving as the one-carbon carrier. This reaction serves as the major source of one-carbon groups required for the biosynthesis of purines, thymidylate, methionine, and other important biomolecules. Also exhibits THF-independent aldolase activity toward beta-hydroxyamino acids, producing glycine and aldehydes, via a retro-aldol mechanism. This Photobacterium profundum (strain SS9) protein is Serine hydroxymethyltransferase 2.